Here is a 338-residue protein sequence, read N- to C-terminus: MNKFLQSCVNGRTLKTGEAEKLMEMMMNGDMSQSEIGGILSVLAHRGETAEELAGFVKVMRARAQTSGGLADVVDTCGTGGDGISTFNISTAAAITASAAGAKVAKHGNRSVSSKSGSADVLEKLGVSIQATPESVKRSIEMKQMGFLFAPLFHSSMKHVAAARKELGFRTVFNLLGPLSNPLQVKRQVIGVYSFDKARLMASALEQFDVRHVMLVSARDGLDELSITAPTDIIELKNGERLEYSVSPEQFGFAEGSLKDIQVSSSEESALLIQNIFANKAPSSALHITALNAGAAIYTAGLANDLKEGTKTALEAIQNGDAKRQLERLKQKEEEMYA.

Residues G78, 81–82 (GD), T86, 88–91 (NIST), 106–114 (KHGNRSVSS), and S118 each bind 5-phospho-alpha-D-ribose 1-diphosphate. G78 is an anthranilate binding site. S90 contributes to the Mg(2+) binding site. N109 contacts anthranilate. R164 provides a ligand contact to anthranilate. 2 residues coordinate Mg(2+): D223 and E224.

This sequence belongs to the anthranilate phosphoribosyltransferase family. As to quaternary structure, homodimer. Mg(2+) serves as cofactor.

The catalysed reaction is N-(5-phospho-beta-D-ribosyl)anthranilate + diphosphate = 5-phospho-alpha-D-ribose 1-diphosphate + anthranilate. The protein operates within amino-acid biosynthesis; L-tryptophan biosynthesis; L-tryptophan from chorismate: step 2/5. Functionally, catalyzes the transfer of the phosphoribosyl group of 5-phosphorylribose-1-pyrophosphate (PRPP) to anthranilate to yield N-(5'-phosphoribosyl)-anthranilate (PRA). This Bacillus velezensis (strain DSM 23117 / BGSC 10A6 / LMG 26770 / FZB42) (Bacillus amyloliquefaciens subsp. plantarum) protein is Anthranilate phosphoribosyltransferase.